The primary structure comprises 164 residues: T-cell surface glycoprotein CD3 zeta chain (164 aa).

The signal sequence occupies residues 1–21 (MKWKVSVLACILHVRFPGAEA). Gln-22 is modified (blocked amino end (Gln)). Over 22–30 (QSFGLLDPK) the chain is Extracellular. A helical membrane pass occupies residues 31-51 (LCYLLDGILFIYGVIITALYL). Topologically, residues 52–164 (RAKFSRSAET…ALHMQTLAPR (113 aa)) are cytoplasmic. Ser-58 is subject to Phosphoserine. 3 consecutive ITAM domains span residues 61-89 (TAAN…LEKK), 100-128 (QQRR…EIGT), and 131-159 (ERRR…LHMQ). Phosphotyrosine is present on residues Tyr-72 and Tyr-83. The span at 87 to 96 (EKKRARDPEM) shows a compositional bias: basic and acidic residues. Residues 87-111 (EKKRARDPEMGGKQQRRRNPQEGVY) are disordered. Phosphotyrosine is present on residues Tyr-111, Tyr-123, Tyr-142, and Tyr-153. The segment at 124–143 (SEIGTKGERRRGKGHDGLYQ) is disordered.

It belongs to the CD3Z/FCER1G family. In terms of assembly, the TCR-CD3 complex is composed of a CD3D/CD3E and a CD3G/CD3E heterodimers that preferentially associate with TCRalpha and TCRbeta, respectively, to form TCRalpha/CD3E/CD3G and TCRbeta/CD3G/CD3E trimers. In turn, the hexamer interacts with CD3Z homodimer to form the TCR-CD3 complex. Alternatively, TCRalpha and TCRbeta can be replaced by TCRgamma and TCRdelta. Interacts with SLA. Interacts with SLA2. Interacts with TRAT1. Interacts with DOCK2. Interacts with SHB. Interacts with ZAP70. Interacts (tyrosine phosphorylated) with SHC1 (via SH2 domain). Interacts with PTPRC. Interacts with CRK; this interaction regulates CD3Z phosphorylation. Interacts (on T cell side) with CD81, ICAM1 and CD9 at immunological synapses between antigen-presenting cells and T cells. Interacts with CD160. Interacts with LY6E. Interacts with LY6E. The signaling subunit of immunoglobulin gamma (IgG) Fc receptor complex. As a homodimer or a heterodimer with FCER1G, associates with the ligand binding subunit FCGR3A (via transmembrane domain); this interaction is a prerequisite for Fc receptor complex expression on the cell surface. Interacts with CD5. In terms of processing, phosphorylated on Tyr residues after T-cell receptor triggering by LCK in association with CD4/CD8. As to expression, CD3Z is expressed in normal lymphoid tissue and in peripheral blood mononuclear cells (PBMCs). Expressed also in retinal ganglion cells.

The protein resides in the cell membrane. Functionally, part of the TCR-CD3 complex present on T-lymphocyte cell surface that plays an essential role in adaptive immune response. When antigen presenting cells (APCs) activate T-cell receptor (TCR), TCR-mediated signals are transmitted across the cell membrane by the CD3 chains CD3D, CD3E, CD3G and CD3Z. All CD3 chains contain immunoreceptor tyrosine-based activation motifs (ITAMs) in their cytoplasmic domain. Upon TCR engagement, these motifs become phosphorylated by Src family protein tyrosine kinases LCK and FYN, resulting in the activation of downstream signaling pathways. CD3Z ITAMs phosphorylation creates multiple docking sites for the protein kinase ZAP70 leading to ZAP70 phosphorylation and its conversion into a catalytically active enzyme. Plays an important role in intrathymic T-cell differentiation. Additionally, participates in the activity-dependent synapse formation of retinal ganglion cells (RGCs) in both the retina and dorsal lateral geniculate nucleus (dLGN). The polypeptide is T-cell surface glycoprotein CD3 zeta chain (Cd247) (Mus musculus (Mouse)).